The primary structure comprises 692 residues: Elongation factor G (692 aa).

The region spanning 8–282 (EKTRNIGIMA…AVVEYMPAPT (275 aa)) is the tr-type G domain. Residues 17–24 (AHIDAGKT), 81–85 (DTPGH), and 135–138 (NKMD) each bind GTP. Residues 285 to 304 (PNIKGVHPETGEADERHSSD) form a disordered region. Residues 290–304 (VHPETGEADERHSSD) are compositionally biased toward basic and acidic residues.

The protein belongs to the TRAFAC class translation factor GTPase superfamily. Classic translation factor GTPase family. EF-G/EF-2 subfamily.

Its subcellular location is the cytoplasm. Its function is as follows. Catalyzes the GTP-dependent ribosomal translocation step during translation elongation. During this step, the ribosome changes from the pre-translocational (PRE) to the post-translocational (POST) state as the newly formed A-site-bound peptidyl-tRNA and P-site-bound deacylated tRNA move to the P and E sites, respectively. Catalyzes the coordinated movement of the two tRNA molecules, the mRNA and conformational changes in the ribosome. The chain is Elongation factor G from Desulfitobacterium hafniense (strain Y51).